The following is a 315-amino-acid chain: Carbamate kinase (315 aa).

It belongs to the carbamate kinase family. In terms of assembly, homodimer.

It localises to the cytoplasm. The catalysed reaction is hydrogencarbonate + NH4(+) + ATP = carbamoyl phosphate + ADP + H2O + H(+). This is Carbamate kinase (cpkA) from Thermococcus kodakarensis (strain ATCC BAA-918 / JCM 12380 / KOD1) (Pyrococcus kodakaraensis (strain KOD1)).